The following is a 182-amino-acid chain: Large ribosomal subunit protein bL25 (182 aa).

It belongs to the bacterial ribosomal protein bL25 family. CTC subfamily. Part of the 50S ribosomal subunit; part of the 5S rRNA/L5/L18/L25 subcomplex. Contacts the 5S rRNA. Binds to the 5S rRNA independently of L5 and L18.

In terms of biological role, this is one of the proteins that binds to the 5S RNA in the ribosome where it forms part of the central protuberance. The protein is Large ribosomal subunit protein bL25 of Borreliella afzelii (strain PKo) (Borrelia afzelii).